The primary structure comprises 599 residues: Sulfite reductase [NADPH] flavoprotein alpha-component (599 aa).

The Flavodoxin-like domain maps to 64–202 (ITIISASQTG…AASEWRARVV (139 aa)). Residues 70-75 (SQTGNA), 117-120 (STQG), and 153-162 (LGDSSYEFFC) contribute to the FMN site. The region spanning 234-448 (DAPLVASLSV…IEHNDNFRLP (215 aa)) is the FAD-binding FR-type domain. Residues Thr322, Ala356, 386-389 (RLYS), 404-406 (TVG), Tyr410, and 419-422 (GGAS) contribute to the FAD site. NADP(+)-binding positions include 519-520 (SR), 525-529 (KVYVQ), and Asp561. Tyr599 contributes to the FAD binding site.

It belongs to the NADPH-dependent sulphite reductase flavoprotein subunit CysJ family. In the N-terminal section; belongs to the flavodoxin family. The protein in the C-terminal section; belongs to the flavoprotein pyridine nucleotide cytochrome reductase family. In terms of assembly, alpha(8)-beta(8). The alpha component is a flavoprotein, the beta component is a hemoprotein. FAD serves as cofactor. The cofactor is FMN.

The enzyme catalyses hydrogen sulfide + 3 NADP(+) + 3 H2O = sulfite + 3 NADPH + 4 H(+). It participates in sulfur metabolism; hydrogen sulfide biosynthesis; hydrogen sulfide from sulfite (NADPH route): step 1/1. In terms of biological role, component of the sulfite reductase complex that catalyzes the 6-electron reduction of sulfite to sulfide. This is one of several activities required for the biosynthesis of L-cysteine from sulfate. The flavoprotein component catalyzes the electron flow from NADPH -&gt; FAD -&gt; FMN to the hemoprotein component. This Escherichia coli O157:H7 protein is Sulfite reductase [NADPH] flavoprotein alpha-component.